The following is a 397-amino-acid chain: Elongation factor Tu (397 aa).

Positions 10–206 (KPHVNIGTIG…AIDSYIPTPE (197 aa)) constitute a tr-type G domain. A G1 region spans residues 19–26 (GHVDHGKT). Residue 19–26 (GHVDHGKT) coordinates GTP. Threonine 26 provides a ligand contact to Mg(2+). The interval 60 to 64 (GITIN) is G2. Positions 81–84 (DCPG) are G3. Residues 81–85 (DCPGH) and 136–139 (NKAD) each bind GTP. A G4 region spans residues 136–139 (NKAD). The G5 stretch occupies residues 174-176 (SAL).

This sequence belongs to the TRAFAC class translation factor GTPase superfamily. Classic translation factor GTPase family. EF-Tu/EF-1A subfamily. Monomer.

It localises to the cytoplasm. It carries out the reaction GTP + H2O = GDP + phosphate + H(+). GTP hydrolase that promotes the GTP-dependent binding of aminoacyl-tRNA to the A-site of ribosomes during protein biosynthesis. This Clostridium botulinum (strain Loch Maree / Type A3) protein is Elongation factor Tu.